The chain runs to 401 residues: Pleckstrin homology-like domain family A member 1 (401 aa).

Disordered stretches follow at residues 39–67 (IQKR…ARSS), 190–222 (QQQQ…AVAS), and 293–401 (KSTR…SNSA). The 133-residue stretch at 151–283 (LKEGVLEKRS…AEITLQMVQY (133 aa)) folds into the PH domain. The segment covering 190–204 (QQQQQQQQQQQQQQQ) has biased composition (low complexity). Pro residues predominate over residues 308–344 (PSQPQPQPQLQPQPQPQPQPQPQPQSQPQPQPQPKPQ). Residues 311–346 (PQPQPQLQPQPQPQPQPQPQPQSQPQPQPQPKPQPQ) form a 15 X 2 AA repeats of P-Q region. Positions 352-378 (PHPHPHPHSHPHSHPHPHPHPHPHQIP) are enriched in basic residues. The segment at 352 to 389 (PHPHPHPHSHPHSHPHPHPHPHPHQIPHPHPQPHSQPH) is 14 X 2 AA repeats of P-H.

In terms of assembly, interacts with RPL14, EIF3S7 and PABPC4. Widely expressed with highest levels in pancreas. Strongly expressed by benign melanocytic nevi, and progressively reduced expressed in primary and metastatic melanomas (at protein level).

The protein resides in the cytoplasm. It localises to the cytoplasmic vesicle. It is found in the nucleus. The protein localises to the nucleolus. Its function is as follows. Seems to be involved in regulation of apoptosis. May be involved in detachment-mediated programmed cell death. May mediate apoptosis during neuronal development. May be involved in regulation of anti-apoptotic effects of IGF1. May be involved in translational regulation. This is Pleckstrin homology-like domain family A member 1 (PHLDA1) from Homo sapiens (Human).